The following is a 182-amino-acid chain: Isopentenyl-diphosphate Delta-isomerase (182 aa).

Mn(2+) contacts are provided by H25 and H32. The 135-residue stretch at 30-164 (PLHLAFSCWL…PWAFSPWMVM (135 aa)) folds into the Nudix hydrolase domain. C67 is a catalytic residue. H69 lines the Mn(2+) pocket. Residue E87 participates in Mg(2+) binding. Mn(2+)-binding residues include E114 and E116. E116 is a catalytic residue.

It belongs to the IPP isomerase type 1 family. In terms of assembly, homodimer. Mg(2+) is required as a cofactor. Requires Mn(2+) as cofactor.

It is found in the cytoplasm. It carries out the reaction isopentenyl diphosphate = dimethylallyl diphosphate. It functions in the pathway isoprenoid biosynthesis; dimethylallyl diphosphate biosynthesis; dimethylallyl diphosphate from isopentenyl diphosphate: step 1/1. Its function is as follows. Catalyzes the 1,3-allylic rearrangement of the homoallylic substrate isopentenyl (IPP) to its highly electrophilic allylic isomer, dimethylallyl diphosphate (DMAPP). This chain is Isopentenyl-diphosphate Delta-isomerase, found in Salmonella arizonae (strain ATCC BAA-731 / CDC346-86 / RSK2980).